Reading from the N-terminus, the 299-residue chain is Taste receptor type 2 member 50 (299 aa).

Met1 is a topological domain (extracellular). Residues 2-22 form a helical membrane-spanning segment; the sequence is ITFLYIFFSILIMVLFVLGNF. Residues 23 to 55 lie on the Cytoplasmic side of the membrane; that stretch reads ANGFIALVNFIDWVKRKKISSADQILTALAVSR. Residues 56-76 traverse the membrane as a helical segment; that stretch reads IGLLWTLLLNWYLTVLNPAFY. Residues 77–87 lie on the Extracellular side of the membrane; that stretch reads SVELRITSYNA. The chain crosses the membrane as a helical span at residues 88 to 108; it reads WVVTNHFSMWLAASLSIFYLL. Over 109–126 the chain is Cytoplasmic; that stretch reads KIANFSNLIFLHLKRRVR. The chain crosses the membrane as a helical span at residues 127–147; sequence SVILVILLGTLIFLVCHLLVA. Residues 148–181 lie on the Extracellular side of the membrane; sequence NMDESMWAEEYEGNITGKMKLRNTVHLSYLTVTT. Asn161 is a glycosylation site (N-linked (GlcNAc...) asparagine). The chain crosses the membrane as a helical span at residues 182–202; sequence LWSFIPFTLSLISFLMLICSL. Residues 203-229 lie on the Cytoplasmic side of the membrane; sequence CKHLKKMQLHGEGSQDLSTKVHIKALQ. A helical transmembrane segment spans residues 230 to 250; the sequence is TLISFLLLCAIFFLFLIISVW. Topologically, residues 251–259 are extracellular; sequence SPRRLRNDP. Residues 260–280 traverse the membrane as a helical segment; that stretch reads VVMVSKAVGNIYLAFDSFILI. Residues 281–299 are Cytoplasmic-facing; sequence WRTKKLKHTFLLILCQIRC.

This sequence belongs to the G-protein coupled receptor T2R family.

It localises to the membrane. Functionally, receptor that may play a role in the perception of bitterness and is gustducin-linked. May play a role in sensing the chemical composition of the gastrointestinal content. The activity of this receptor may stimulate alpha gustducin, mediate PLC-beta-2 activation and lead to the gating of TRPM5. In Pan paniscus (Pygmy chimpanzee), this protein is Taste receptor type 2 member 50 (TAS2R50).